We begin with the raw amino-acid sequence, 139 residues long: MDSLTVNVVTPNGLVYDHHAKIVVAKTTDGEIGILPKHAPIIVPLAIDEVRIKRTDSDTHVDWVAVNGGIMEVRDNVVSIIADSAERERDIDVPRAERAKQRAERLIEEAKAKDDRDQLRRATVALHRAINRINVSKHG.

It belongs to the ATPase epsilon chain family. In terms of assembly, F-type ATPases have 2 components, CF(1) - the catalytic core - and CF(0) - the membrane proton channel. CF(1) has five subunits: alpha(3), beta(3), gamma(1), delta(1), epsilon(1). CF(0) has three main subunits: a, b and c.

The protein resides in the cell membrane. Its function is as follows. Produces ATP from ADP in the presence of a proton gradient across the membrane. This chain is ATP synthase epsilon chain, found in Enterococcus faecalis (strain ATCC 700802 / V583).